We begin with the raw amino-acid sequence, 130 residues long: Small ribosomal subunit protein uS9 (130 aa).

The disordered stretch occupies residues 108–130; the sequence is PRMKERRKYGLKKARRAPQFSKR. Residues 111–130 show a composition bias toward basic residues; that stretch reads KERRKYGLKKARRAPQFSKR.

Belongs to the universal ribosomal protein uS9 family.

The polypeptide is Small ribosomal subunit protein uS9 (Desulforamulus reducens (strain ATCC BAA-1160 / DSM 100696 / MI-1) (Desulfotomaculum reducens)).